The sequence spans 140 residues: ATP synthase epsilon chain (140 aa).

It belongs to the ATPase epsilon chain family. As to quaternary structure, F-type ATPases have 2 components, CF(1) - the catalytic core - and CF(0) - the membrane proton channel. CF(1) has five subunits: alpha(3), beta(3), gamma(1), delta(1), epsilon(1). CF(0) has three main subunits: a, b and c.

It localises to the cell membrane. In terms of biological role, produces ATP from ADP in the presence of a proton gradient across the membrane. The protein is ATP synthase epsilon chain of Dehalococcoides mccartyi (strain ATCC BAA-2100 / JCM 16839 / KCTC 5957 / BAV1).